Consider the following 479-residue polypeptide: Kynurenine 3-monooxygenase (479 aa).

Residues valine 19, 37 to 40, and alanine 57 contribute to the FAD site; that span reads YEAR. L-kynurenine-binding residues include arginine 85 and tyrosine 99. FAD-binding positions include arginine 111, leucine 136, threonine 172, aspartate 304, and 317–318; that span reads MN. Asparagine 363 and tyrosine 398 together coordinate L-kynurenine. A run of 2 helical transmembrane segments spans residues 385–404 and 425–445; these read FLHA…VAFT and GLFV…VHHL.

The protein belongs to the aromatic-ring hydroxylase family. KMO subfamily. The cofactor is FAD. Expressed by organs containing secondary lymphoid tissue, such as the lung, spleen, mesenteric lymph node, thymus and peripheral lymph nodes.

The protein resides in the mitochondrion outer membrane. It carries out the reaction L-kynurenine + NADPH + O2 + H(+) = 3-hydroxy-L-kynurenine + NADP(+) + H2O. It functions in the pathway cofactor biosynthesis; NAD(+) biosynthesis; quinolinate from L-kynurenine: step 1/3. Its function is as follows. Catalyzes the hydroxylation of L-kynurenine (L-Kyn) to form 3-hydroxy-L-kynurenine (L-3OHKyn). Required for synthesis of quinolinic acid, a neurotoxic NMDA receptor antagonist and potential endogenous inhibitor of NMDA receptor signaling in axonal targeting, synaptogenesis and apoptosis during brain development. Quinolinic acid may also affect NMDA receptor signaling in pancreatic beta cells, osteoblasts, myocardial cells, and the gastrointestinal tract. In Mus musculus (Mouse), this protein is Kynurenine 3-monooxygenase.